A 285-amino-acid polypeptide reads, in one-letter code: MKAPGLPADQQFFADLFSGLVLNPQLLGRVWFASQPASLPVGSLCIDFPRLDIVLRGEYGNLLEAKQQRLVEGEMLFIPARAANLPVNNKPVMLLSLVFAPTWLGLSFYDSRTTSLLHPARQIQLPSLQRGEGEAMLTALTHLSRSPLEQNIIQPLVLSLLHLCRSVVNMPPGNSQPRGDFLYHSICNWVQDNYAQPLTRESVAQFFNITPNHLSKLFAQHGTMRFIEYVRWVRMAKARMILQKYHLSIHEVAQRCGFPDSDYFCRVFRRQFGLTPGEYSARFQG.

One can recognise an HTH araC/xylS-type domain in the interval 184 to 282 (HSICNWVQDN…GLTPGEYSAR (99 aa)). DNA-binding regions (H-T-H motif) lie at residues 201–222 (ESVA…AQHG) and 249–272 (IHEV…RRQF).

This is an uncharacterized protein from Escherichia coli (strain K12).